Reading from the N-terminus, the 40-residue chain is Dolichyl-diphosphooligosaccharide--protein glycosyltransferase subunit 4 (40 aa).

At 1–4 (MISD) the chain is on the lumenal side. The chain crosses the membrane as a helical span at residues 5-25 (VQLAIFSNVLGVFLFLLVVAY). Topologically, residues 26–40 (HYINANTGKPSAKAK) are cytoplasmic.

Belongs to the OST4 family. As to quaternary structure, component of the oligosaccharyltransferase (OST) complex.

It is found in the endoplasmic reticulum membrane. Functionally, subunit of the oligosaccharyl transferase (OST) complex that catalyzes the initial transfer of a defined glycan (Glc(3)Man(9)GlcNAc(2) in eukaryotes) from the lipid carrier dolichol-pyrophosphate to an asparagine residue within an Asn-X-Ser/Thr consensus motif in nascent polypeptide chains, the first step in protein N-glycosylation. N-glycosylation occurs cotranslationally and the complex associates with the Sec61 complex at the channel-forming translocon complex that mediates protein translocation across the endoplasmic reticulum (ER). All subunits are required for a maximal enzyme activity. This chain is Dolichyl-diphosphooligosaccharide--protein glycosyltransferase subunit 4, found in Drosophila yakuba (Fruit fly).